Consider the following 132-residue polypeptide: D-ribose pyranase (132 aa).

Residue histidine 20 is the Proton donor of the active site. Residues aspartate 28, histidine 99, and 121-123 (YSN) each bind substrate.

The protein belongs to the RbsD / FucU family. RbsD subfamily. In terms of assembly, homodecamer.

The protein localises to the cytoplasm. It catalyses the reaction beta-D-ribopyranose = beta-D-ribofuranose. The protein operates within carbohydrate metabolism; D-ribose degradation; D-ribose 5-phosphate from beta-D-ribopyranose: step 1/2. Catalyzes the interconversion of beta-pyran and beta-furan forms of D-ribose. The chain is D-ribose pyranase from Lactococcus lactis subsp. cremoris (strain SK11).